The following is a 741-amino-acid chain: Linoleate 9S-lipoxygenase (741 aa).

The PLAT domain maps to 1-53; the sequence is IPGAFYIKNFMQVEFYLKSLTLEDIPNHGTIHFICNSWIYNSKVYKSDRIFFA. The Lipoxygenase domain maps to 56 to 741; that stretch reads TYLPSETPAP…SEEGLTFRGI (686 aa). Positions 108–144 are disordered; sequence ALARPVLGGSTLPYPRRGRTGRPKTKKDPNSEKPSDF. A compositionally biased stretch (basic residues) spans 123 to 132; it reads RRGRTGRPKT. Residues 133–144 are compositionally biased toward basic and acidic residues; that stretch reads KKDPNSEKPSDF. Positions 407, 412, 598, and 602 each coordinate Fe cation.

The protein belongs to the lipoxygenase family. In terms of assembly, monomer. Fe cation serves as cofactor.

The protein resides in the cytoplasm. It catalyses the reaction (9Z,12Z)-octadecadienoate + O2 = (9S)-hydroperoxy-(10E,12Z)-octadecadienoate. It carries out the reaction (9Z,12Z)-octadecadienoate + O2 = (13S)-hydroperoxy-(9Z,11E)-octadecadienoate. The catalysed reaction is (9Z,12Z,15Z)-octadecatrienoate + O2 = (13S)-hydroperoxy-(9Z,11E,15Z)-octadecatrienoate. It functions in the pathway lipid metabolism; oxylipin biosynthesis. In terms of biological role, plant lipoxygenase may be involved in a number of diverse aspects of plant physiology including growth and development, pest resistance, and senescence or responses to wounding. It catalyzes the hydroperoxidation of lipids containing a cis,cis-1,4-pentadiene structure. This Phaseolus vulgaris (Kidney bean) protein is Linoleate 9S-lipoxygenase.